Consider the following 530-residue polypeptide: Glutamate--cysteine ligase (530 aa).

The protein belongs to the glutamate--cysteine ligase type 1 family. Type 1 subfamily.

It catalyses the reaction L-cysteine + L-glutamate + ATP = gamma-L-glutamyl-L-cysteine + ADP + phosphate + H(+). It functions in the pathway sulfur metabolism; glutathione biosynthesis; glutathione from L-cysteine and L-glutamate: step 1/2. The chain is Glutamate--cysteine ligase from Azotobacter vinelandii (strain DJ / ATCC BAA-1303).